The sequence spans 382 residues: Galactokinase (382 aa).

Residue 34–37 (EHTD) participates in substrate binding. 124 to 130 (GAGLSSS) provides a ligand contact to ATP. Ser130 and Glu162 together coordinate Mg(2+). Residue Asp174 is the Proton acceptor of the active site. Residue Tyr223 participates in substrate binding.

The protein belongs to the GHMP kinase family. GalK subfamily.

It is found in the cytoplasm. The catalysed reaction is alpha-D-galactose + ATP = alpha-D-galactose 1-phosphate + ADP + H(+). Its pathway is carbohydrate metabolism; galactose metabolism. Functionally, catalyzes the transfer of the gamma-phosphate of ATP to D-galactose to form alpha-D-galactose-1-phosphate (Gal-1-P). The sequence is that of Galactokinase from Cronobacter sakazakii (strain ATCC BAA-894) (Enterobacter sakazakii).